The following is a 137-amino-acid chain: Putative pumilio homolog 25 (137 aa).

2 Pumilio repeats span residues 70-105 (EFDSYFENLVKDRVGNYVVQRLIWGFKRTGIDLPHS) and 108-137 (SVLVTRSIHLCKHRYGYQVIEAFDRSTRLA).

It is found in the cytoplasm. Functionally, sequence-specific RNA-binding protein that regulates translation and mRNA stability by binding the 3'-UTR of target mRNAs. In Arabidopsis thaliana (Mouse-ear cress), this protein is Putative pumilio homolog 25 (APUM25).